The sequence spans 439 residues: Nuclear distribution protein PAC1 (439 aa).

Residues 55–90 (NSIVRLQSKIMELEKNCEELQKSIDEQQSSTNQISN) are a coiled coil. WD repeat units follow at residues 106 to 145 (TLDA…LPLQ), 149 to 193 (AHMD…TLSH), 199 to 240 (GHEH…CIKS), 243 to 282 (PHTQ…SMGI), 295 to 335 (IPDP…FIPH), 355 to 392 (DHNS…LSTT), and 402 to 438 (NKGF…TSFM).

The protein belongs to the WD repeat LIS1/nudF family. As to quaternary structure, self-associates. Interacts with NDL1 and dynein.

Its subcellular location is the cytoplasm. It is found in the cytoskeleton. The protein localises to the spindle pole. Its function is as follows. Positively regulates the activity of the minus-end directed microtubule motor protein dynein. Plays a central role in positioning the mitotic spindle at the bud neck during cell division. Targets cytoplasmic dynein to microtubule plus ends, thereby promoting dynein-mediated microtubule sliding along the bud cortex and consequently the movement of the mitotic spindle to the bud neck. This chain is Nuclear distribution protein PAC1, found in Kluyveromyces lactis (strain ATCC 8585 / CBS 2359 / DSM 70799 / NBRC 1267 / NRRL Y-1140 / WM37) (Yeast).